The chain runs to 506 residues: Maturase K (506 aa).

Belongs to the intron maturase 2 family. MatK subfamily.

Its subcellular location is the plastid. The protein resides in the chloroplast. In terms of biological role, usually encoded in the trnK tRNA gene intron. Probably assists in splicing its own and other chloroplast group II introns. The chain is Maturase K from Andromeda polifolia (Bog rosemary).